The sequence spans 275 residues: Autophagy protein 5 (275 aa).

Position 1 is an N-acetylmethionine (M1). K130 is covalently cross-linked (Glycyl lysine isopeptide (Lys-Gly) (interchain with G-Cter in ATG12)).

The protein belongs to the ATG5 family. In terms of assembly, forms a conjugate with ATG12. Part of the minor complex composed of 4 sets of ATG12-ATG5 and ATG16L1 (400 kDa); this complex interacts with ATG3 leading to disruption of ATG7 interaction and promotion of ATG8-like proteins lipidation. Forms an 800-kDa complex composed of ATG12-ATG5 and ATG16L2. The ATG12-ATG5 conjugate interacts with RAB33A; this interaction is bridged by ATG16L1 and promotes ATG12-ATG5-ATG16L1 complex recruitment to phagophores. Interacts with TECPR1; the interaction is direct and does not take place when ATG16L1 is associated with the ATG5-ATG12 conjugate. Interacts with DHX58/RIG-1, IFIH1/MDA5 and MAVS/IPS-1 in monomeric form as well as in ATG12-ATG5 conjugate form. The interaction with MAVS is further enhanced upon vesicular stomatitis virus (VSV) infection. Interacts with ATG3. Interacts with ATG7 and ATG10. Interacts with FADD. Interacts with Bassoon/BSN; this interaction is important for the regulation of presynaptic autophagy. Interacts with ATG16L2. Post-translationally, conjugated to ATG12; which is essential for autophagy, but is not required for association with isolation membrane. In terms of processing, acetylated by EP300.

The protein resides in the cytoplasm. It localises to the preautophagosomal structure membrane. Its function is as follows. Involved in autophagic vesicle formation. Conjugation with ATG12, through a ubiquitin-like conjugating system involving ATG7 as an E1-like activating enzyme and ATG10 as an E2-like conjugating enzyme, is essential for its function. The ATG12-ATG5 conjugate acts as an E3-like enzyme which is required for lipidation of ATG8 family proteins and their association to the vesicle membranes. Involved in mitochondrial quality control after oxidative damage, and in subsequent cellular longevity. Plays a critical role in multiple aspects of lymphocyte development and is essential for both B and T lymphocyte survival and proliferation. Required for optimal processing and presentation of antigens for MHC II. Involved in the maintenance of axon morphology and membrane structures, as well as in normal adipocyte differentiation. Promotes primary ciliogenesis through removal of OFD1 from centriolar satellites and degradation of IFT20 via the autophagic pathway. As part of the ATG8 conjugation system with ATG12 and ATG16L1, required for recruitment of LRRK2 to stressed lysosomes and induction of LRRK2 kinase activity in response to lysosomal stress. Functionally, may play an important role in the apoptotic process, possibly within the modified cytoskeleton. Its expression is a relatively late event in the apoptotic process, occurring downstream of caspase activity. Plays a crucial role in IFN-gamma-induced autophagic cell death by interacting with FADD. This is Autophagy protein 5 from Pongo abelii (Sumatran orangutan).